We begin with the raw amino-acid sequence, 133 residues long: MMLNSDTMELDLPPTHSETESGFSDCGGGAGPDGAGPGGPGGGQARGPEPGEPGRKDLQHLSREERRRRRRATAKYRTAHATRERIRVEAFNLAFAELRKLLPTLPPDKKLSKIEILRLAICYISYLNHVLDV.

The segment at 1-79 (MMLNSDTMEL…RRATAKYRTA (79 aa)) is disordered. The segment covering 25–45 (DCGGGAGPDGAGPGGPGGGQA) has biased composition (gly residues). Basic and acidic residues predominate over residues 52–65 (EPGRKDLQHLSREE). The span at 66-79 (RRRRRRATAKYRTA) shows a compositional bias: basic residues. A bHLH domain is found at 75 to 127 (KYRTAHATRERIRVEAFNLAFAELRKLLPTLPPDKKLSKIEILRLAICYISYL).

Efficient DNA binding requires dimerization with another bHLH protein.

Its subcellular location is the nucleus. Its function is as follows. May serve as DNA-binding protein and may be involved in the control of cell-type determination, possibly within the developing nervous system. This Homo sapiens (Human) protein is Helix-loop-helix protein 1 (NHLH1).